A 159-amino-acid chain; its full sequence is 3-dehydroquinate dehydratase (159 aa).

Tyrosine 31 functions as the Proton acceptor in the catalytic mechanism. Residues asparagine 82, histidine 88, and aspartate 95 each coordinate substrate. Histidine 109 acts as the Proton donor in catalysis. Substrate contacts are provided by residues 110–111 and arginine 120; that span reads IS.

The protein belongs to the type-II 3-dehydroquinase family. In terms of assembly, homododecamer.

It catalyses the reaction 3-dehydroquinate = 3-dehydroshikimate + H2O. Its pathway is metabolic intermediate biosynthesis; chorismate biosynthesis; chorismate from D-erythrose 4-phosphate and phosphoenolpyruvate: step 3/7. Catalyzes a trans-dehydration via an enolate intermediate. This Streptomyces avermitilis (strain ATCC 31267 / DSM 46492 / JCM 5070 / NBRC 14893 / NCIMB 12804 / NRRL 8165 / MA-4680) protein is 3-dehydroquinate dehydratase.